An 895-amino-acid polypeptide reads, in one-letter code: Alanine--tRNA ligase (895 aa).

4 residues coordinate Zn(2+): His-577, His-581, Cys-680, and His-684.

This sequence belongs to the class-II aminoacyl-tRNA synthetase family. It depends on Zn(2+) as a cofactor.

It is found in the cytoplasm. The catalysed reaction is tRNA(Ala) + L-alanine + ATP = L-alanyl-tRNA(Ala) + AMP + diphosphate. Catalyzes the attachment of alanine to tRNA(Ala) in a two-step reaction: alanine is first activated by ATP to form Ala-AMP and then transferred to the acceptor end of tRNA(Ala). Also edits incorrectly charged Ser-tRNA(Ala) and Gly-tRNA(Ala) via its editing domain. This is Alanine--tRNA ligase from Kocuria rhizophila (strain ATCC 9341 / DSM 348 / NBRC 103217 / DC2201).